A 544-amino-acid chain; its full sequence is Chaperonin GroEL 2 (544 aa).

Residues 29-32 (TLGP), 86-90 (DGTTT), glycine 413, 479-481 (NAA), and aspartate 495 each bind ATP.

The protein belongs to the chaperonin (HSP60) family. In terms of assembly, forms a cylinder of 14 subunits composed of two heptameric rings stacked back-to-back. Interacts with the co-chaperonin GroES.

Its subcellular location is the cytoplasm. The catalysed reaction is ATP + H2O + a folded polypeptide = ADP + phosphate + an unfolded polypeptide.. In terms of biological role, together with its co-chaperonin GroES, plays an essential role in assisting protein folding. The GroEL-GroES system forms a nano-cage that allows encapsulation of the non-native substrate proteins and provides a physical environment optimized to promote and accelerate protein folding. The protein is Chaperonin GroEL 2 of Prochlorococcus marinus (strain MIT 9313).